Reading from the N-terminus, the 391-residue chain is Probable protein arginine N-methyltransferase 6.1 (391 aa).

The tract at residues Met1–Ala35 is disordered. Residues Ser20–Ala35 show a composition bias toward low complexity. The region spanning Asp45 to Arg391 is the SAM-dependent MTase PRMT-type domain. Residues His58, Arg67, Gly91, Glu113, and Glu142 each coordinate S-adenosyl-L-methionine. Catalysis depends on residues Glu156 and Glu165.

The protein belongs to the class I-like SAM-binding methyltransferase superfamily. Protein arginine N-methyltransferase family. PRMT6 subfamily.

In terms of biological role, arginine methyltransferase that can both catalyze the formation of omega-N monomethylarginine (MMA) and asymmetrical dimethylarginine (aDMA). The sequence is that of Probable protein arginine N-methyltransferase 6.1 (PRMT6.1) from Oryza sativa subsp. japonica (Rice).